The following is a 414-amino-acid chain: Histidine--tRNA ligase (414 aa).

It belongs to the class-II aminoacyl-tRNA synthetase family. As to quaternary structure, homodimer.

Its subcellular location is the cytoplasm. The enzyme catalyses tRNA(His) + L-histidine + ATP = L-histidyl-tRNA(His) + AMP + diphosphate + H(+). This Pelobacter propionicus (strain DSM 2379 / NBRC 103807 / OttBd1) protein is Histidine--tRNA ligase.